The sequence spans 176 residues: Disulfide bond formation protein B (176 aa).

At 1–14 (MLRFLNQCSQGRGA) the chain is on the cytoplasmic side. The helical transmembrane segment at 15-31 (WLLMAFTALALELTALW) threads the bilayer. The Periplasmic segment spans residues 32–49 (FQHVMLLKPCVLCIYERC). C41 and C44 are disulfide-bonded. A helical membrane pass occupies residues 50 to 65 (ALFGVLGAALIGAIAP). Over 66-71 (KTPLRY) the chain is Cytoplasmic. Residues 72 to 89 (VAMVIWLYSAFRGVQLTY) form a helical membrane-spanning segment. The Periplasmic segment spans residues 90–144 (EHTMLQLYPSPFATCDFMVRFPEWLPLDKWVPQVFVASGDCAERQWDFLGLEMPQ). The cysteines at positions 104 and 130 are disulfide-linked. A helical membrane pass occupies residues 145–163 (WLLGIFIAYLIVAVLVMIS). Topologically, residues 164-176 (QPFKAKKRDLFGR) are cytoplasmic.

The protein belongs to the DsbB family.

Its subcellular location is the cell inner membrane. Functionally, required for disulfide bond formation in some periplasmic proteins. Acts by oxidizing the DsbA protein. The polypeptide is Disulfide bond formation protein B (Shigella sonnei (strain Ss046)).